The chain runs to 27 residues: Delta-actitoxin-Avd2a (27 aa).

Disulfide bonds link C3-C17, C4-C11, and C6-C22.

Belongs to the sea anemone short toxin (type III) family.

It is found in the secreted. Its subcellular location is the nematocyst. Functionally, specific arthropod (crab and insect) toxin that inhibits inactivation of voltage-gated sodium channels. It competes well with the site-3 toxin LqhalphaIT (from the scorpion L.quinquestriatus (AC P17728)) on binding to cockroach neuronal membranes (Ki=21.4 nM), and inhibits the inactivation of D.melanogaster channel (DmNav1), but not that of mammalian Navs expressed in Xenopus oocytes. Its activity is synergically enhanced by ligands of receptor site-4 (Bj-xtrIT (AC P56637)). Its ability to inhibit the channel mutant DmNav1[D1701R] only decreases 5-fold, whereas the inhibition activity is completely lost by LqhalphaIT and Av2 when tested on DmNav1[D1701R]. The protein is Delta-actitoxin-Avd2a of Anemonia sulcata (Mediterranean snakelocks sea anemone).